A 282-amino-acid polypeptide reads, in one-letter code: Complement component 1 Q subcomponent-binding protein, mitochondrial (282 aa).

The transit peptide at 1-73 directs the protein to the mitochondrion; the sequence is MLPLLRCVPR…PCACGCGCGS (73 aa). A C1q binding region spans residues 76 to 93; sequence TDGDKAFVDFLSDEIKEE. Ser-87 is modified (phosphoserine). At Lys-91 the chain carries N6-acetyllysine. Residues 138–164 are disordered; that stretch reads SIPPTFDGEEEPSQGQKVEEQEPELTS. An interaction with MAVS region spans residues 168–213; that stretch reads FVVEVIKNDDGKKALVLDCHYPEDEVGQEDEAESDIFSIREVSFQS. Tyr-188 carries the phosphotyrosine modification. Phosphoserine is present on residues Ser-201 and Ser-205. Thr-214 is subject to Phosphothreonine.

The protein belongs to the MAM33 family. Homotrimer; three monomers form a donut-shaped structure with an unusually asymmetric charge distribution on the surface. Interacts with CDK13, HRK, VTN, NFYB, ADRA1B, FOXC1, DDX21, DDX50, NCL, SRSF1, SRSF9 and CDKN2A isoform smARF. Interacts with CD93; the association may represent a cell surface C1q receptor. Interacts with KRT1; the association represents a cell surface kininogen receptor. Interacts with CD209; the interaction is indicative for a C1q:C1QBP:CD209 signaling complex. Interacts with FBL and RRP1; the respective interactions with C1QBP are competitive. Probably associates with the mitoribosome. Interacts with MAVS; the interaction occurs upon viral transfection. Interacts with PPIF. Interacts with U2AF1L4. Interacts with PLEKHN1. Interacts with VGF-derived peptide TLQP-21. Interacts with POLGARF which is produced from an alternative reading frame of the POLG gene; the interaction results in nucleolar localization of C1QBP, probably due to prevention of C1QBP maturation and redirection from mitochondria to nucleoli. Interacts with MRE11 and RAD50; forming the MRC (MRE11-RAD50-C1QBP) complex that inhibits the activity of MRE11. In terms of assembly, (Microbial infection) Interacts with Rubella virus capsid protein; the interaction occurs in mitochondria. Interacts with Rubella virus protease/methyltransferase p150. As to quaternary structure, (Microbial infection) Interacts with Staphylococcus aureus protein A/spa. (Microbial infection) Interacts with Staphylococcus aureus protein A/spa, HIV-1 Tat and HCV core protein. In terms of assembly, (Microbial infection) Interacts with HIV-1 Tat and HCV core protein. As to quaternary structure, (Microbial infection) Interacts with L.monocytogenes internalin B. (Microbial infection) Interacts with Epstein-Barr virus EBNA1. As to expression, expressed on cell surface of peripheral blood cells (at protein level); Surface expression is reported for macrophages and monocyte-derived dendritic cells.

It localises to the mitochondrion matrix. The protein resides in the nucleus. Its subcellular location is the nucleolus. It is found in the cell membrane. The protein localises to the secreted. It localises to the cytoplasm. Its function is as follows. Multifunctional and multicompartmental protein involved in inflammation and infection processes, ribosome biogenesis, protein synthesis in mitochondria, regulation of apoptosis, transcriptional regulation and pre-mRNA splicing. At the cell surface is thought to act as an endothelial receptor for plasma proteins of the complement and kallikrein-kinin cascades. Putative receptor for C1q; specifically binds to the globular 'heads' of C1q thus inhibiting C1; may perform the receptor function through a complex with C1qR/CD93. In complex with cytokeratin-1/KRT1 is a high affinity receptor for kininogen-1/HMWK. Can also bind other plasma proteins, such as coagulation factor XII leading to its autoactivation. May function to bind initially fluid kininogen-1 to the cell membrane. The secreted form may enhance both extrinsic and intrinsic coagulation pathways. It is postulated that the cell surface form requires docking with transmembrane proteins for downstream signaling which might be specific for a cell-type or response. By acting as C1q receptor is involved in chemotaxis of immature dendritic cells and neutrophils and is proposed to signal through CD209/DC-SIGN on immature dendritic cells, through integrin alpha-4/beta-1 during trophoblast invasion of the decidua, and through integrin beta-1 during endothelial cell adhesion and spreading. Signaling involved in inhibition of innate immune response is implicating the PI3K-AKT/PKB pathway. Required for protein synthesis in mitochondria. In mitochondrial translation may be involved in formation of functional 55S mitoribosomes; the function seems to involve its RNA-binding activity. Acts as a RNA modification reader, which specifically recognizes and binds mitochondrial RNAs modified by C5-methylcytosine (m5C) in response to stress, and promotes recruitment of the mitochondrial degradosome complex, leading to their degradation. May be involved in the nucleolar ribosome maturation process; the function may involve the exchange of FBL for RRP1 in the association with pre-ribosome particles. Involved in regulation of RNA splicing by inhibiting the RNA-binding capacity of SRSF1 and its phosphorylation. Is required for the nuclear translocation of splicing factor U2AF1L4. Involved in regulation of CDKN2A- and HRK-mediated apoptosis. Stabilizes mitochondrial CDKN2A isoform smARF. May be involved in regulation of FOXC1 transcriptional activity and NFY/CCAAT-binding factor complex-mediated transcription. May play a role in antibacterial defense as it can bind to cell surface hyaluronan and inhibit Streptococcus pneumoniae hyaluronate lyase. May be involved in modulation of the immune response; ligation by HCV core protein is resulting in suppression of interleukin-12 production in monocyte-derived dendritic cells. Involved in regulation of antiviral response by inhibiting RIGI- and IFIH1-mediated signaling pathways probably involving its association with MAVS after viral infection. Acts as a regulator of DNA repair via homologous recombination by inhibiting the activity of MRE11: interacts with unphosphorylated MRE11 and RAD50 in absence of DNA damage, preventing formation and activity of the MRN complex. Following DNA damage, dissociates from phosphorylated MRE11, allowing formation of the MRN complex. Functionally, (Microbial infection) Involved in HIV-1 replication, presumably by contributing to splicing of viral RNA. (Microbial infection) In infection processes acts as an attachment site for microbial proteins, including Listeria monocytogenes internalin B (InlB) and Staphylococcus aureus protein A. In terms of biological role, (Microbial infection) Involved in replication of Rubella virus. The chain is Complement component 1 Q subcomponent-binding protein, mitochondrial (C1QBP) from Homo sapiens (Human).